Consider the following 491-residue polypeptide: Protein nucleotidyltransferase YdiU (491 aa).

Residues glycine 88, glycine 90, arginine 91, lysine 111, aspartate 123, glycine 124, arginine 174, and arginine 181 each contribute to the ATP site. Aspartate 250 acts as the Proton acceptor in catalysis. Asparagine 251 and aspartate 260 together coordinate Mg(2+). Residue aspartate 260 participates in ATP binding. A compositionally biased stretch (basic and acidic residues) spans 466–484 (DDQPDRADYAEPPQPEERV). The segment at 466 to 491 (DDQPDRADYAEPPQPEERVLQTFCGT) is disordered.

The protein belongs to the SELO family. It depends on Mg(2+) as a cofactor. Mn(2+) is required as a cofactor.

It catalyses the reaction L-seryl-[protein] + ATP = 3-O-(5'-adenylyl)-L-seryl-[protein] + diphosphate. The enzyme catalyses L-threonyl-[protein] + ATP = 3-O-(5'-adenylyl)-L-threonyl-[protein] + diphosphate. It carries out the reaction L-tyrosyl-[protein] + ATP = O-(5'-adenylyl)-L-tyrosyl-[protein] + diphosphate. The catalysed reaction is L-histidyl-[protein] + UTP = N(tele)-(5'-uridylyl)-L-histidyl-[protein] + diphosphate. It catalyses the reaction L-seryl-[protein] + UTP = O-(5'-uridylyl)-L-seryl-[protein] + diphosphate. The enzyme catalyses L-tyrosyl-[protein] + UTP = O-(5'-uridylyl)-L-tyrosyl-[protein] + diphosphate. In terms of biological role, nucleotidyltransferase involved in the post-translational modification of proteins. It can catalyze the addition of adenosine monophosphate (AMP) or uridine monophosphate (UMP) to a protein, resulting in modifications known as AMPylation and UMPylation. The polypeptide is Protein nucleotidyltransferase YdiU (Bradyrhizobium sp. (strain ORS 278)).